The sequence spans 295 residues: Diaminopimelate epimerase (295 aa).

Asn-13, Gln-46, and Asn-66 together coordinate substrate. Cys-75 functions as the Proton donor in the catalytic mechanism. Residues 76-77 (GN), Asn-162, Asn-195, and 213-214 (ER) contribute to the substrate site. The Proton acceptor role is filled by Cys-222. A substrate-binding site is contributed by 223–224 (GT).

Belongs to the diaminopimelate epimerase family. As to quaternary structure, homodimer.

It is found in the cytoplasm. The catalysed reaction is (2S,6S)-2,6-diaminopimelate = meso-2,6-diaminopimelate. Its pathway is amino-acid biosynthesis; L-lysine biosynthesis via DAP pathway; DL-2,6-diaminopimelate from LL-2,6-diaminopimelate: step 1/1. Functionally, catalyzes the stereoinversion of LL-2,6-diaminopimelate (L,L-DAP) to meso-diaminopimelate (meso-DAP), a precursor of L-lysine and an essential component of the bacterial peptidoglycan. The chain is Diaminopimelate epimerase from Psychrobacter cryohalolentis (strain ATCC BAA-1226 / DSM 17306 / VKM B-2378 / K5).